Here is a 223-residue protein sequence, read N- to C-terminus: Uracil-DNA glycosylase (223 aa).

Aspartate 66 (proton acceptor) is an active-site residue.

Belongs to the uracil-DNA glycosylase (UDG) superfamily. UNG family.

It localises to the cytoplasm. It catalyses the reaction Hydrolyzes single-stranded DNA or mismatched double-stranded DNA and polynucleotides, releasing free uracil.. Its function is as follows. Excises uracil residues from the DNA which can arise as a result of misincorporation of dUMP residues by DNA polymerase or due to deamination of cytosine. The protein is Uracil-DNA glycosylase of Sulfurimonas denitrificans (strain ATCC 33889 / DSM 1251) (Thiomicrospira denitrificans (strain ATCC 33889 / DSM 1251)).